A 388-amino-acid polypeptide reads, in one-letter code: Ferrochelatase (388 aa).

Fe cation-binding residues include H196 and E277.

Belongs to the ferrochelatase family.

The protein localises to the cytoplasm. It catalyses the reaction heme b + 2 H(+) = protoporphyrin IX + Fe(2+). Its pathway is porphyrin-containing compound metabolism; protoheme biosynthesis; protoheme from protoporphyrin-IX: step 1/1. Functionally, catalyzes the ferrous insertion into protoporphyrin IX. This is Ferrochelatase from Nostoc sp. (strain PCC 7120 / SAG 25.82 / UTEX 2576).